Consider the following 215-residue polypeptide: Beta-crystallin A3 (215 aa).

Met-1 carries the N-acetylmethionine modification. Residues 1 to 24 (METQTVQQELESLPTTKMAQTNPM) form a disordered region. Residues 1–30 (METQTVQQELESLPTTKMAQTNPMPGSVGP) are N-terminal arm. An N-acetylalanine modification is found at Glu-2. 2 consecutive Beta/gamma crystallin 'Greek key' domains span residues 31–70 (WKIT…KVEC) and 71–117 (GAWV…RPIC). Cys-82 and Cys-117 each carry S-glutathionyl cysteine; alternate. An S-methylcysteine; alternate mark is found at Cys-82 and Cys-117. The interval 118–123 (SANHKE) is connecting peptide. Beta/gamma crystallin 'Greek key' domains lie at 124–165 (SKIT…KIQC) and 166–214 (GAWV…RRIQ).

Belongs to the beta/gamma-crystallin family. In terms of assembly, homo/heterodimer, or complexes of higher-order. The structure of beta-crystallin oligomers seems to be stabilized through interactions between the N-terminal arms. Interacts with CRYBA1. Specific cleavages in the N-terminal arm occur during lens maturation and give rise to several truncated forms. Post-translationally, isoform A1 contains a N-acetylalanine at position 2.

Its function is as follows. Crystallins are the dominant structural components of the vertebrate eye lens. This Bos taurus (Bovine) protein is Beta-crystallin A3.